Reading from the N-terminus, the 337-residue chain is Anthranilate phosphoribosyltransferase (337 aa).

5-phospho-alpha-D-ribose 1-diphosphate is bound by residues Gly79, 82-83, Thr87, 89-92, 107-115, and Ser119; these read GD, NVST, and KHGNRSVSS. Position 79 (Gly79) interacts with anthranilate. Residue Ser91 participates in Mg(2+) binding. Asn110 lines the anthranilate pocket. Arg165 provides a ligand contact to anthranilate. Asp223 and Glu224 together coordinate Mg(2+).

Belongs to the anthranilate phosphoribosyltransferase family. Homodimer. Requires Mg(2+) as cofactor.

The enzyme catalyses N-(5-phospho-beta-D-ribosyl)anthranilate + diphosphate = 5-phospho-alpha-D-ribose 1-diphosphate + anthranilate. It functions in the pathway amino-acid biosynthesis; L-tryptophan biosynthesis; L-tryptophan from chorismate: step 2/5. In terms of biological role, catalyzes the transfer of the phosphoribosyl group of 5-phosphorylribose-1-pyrophosphate (PRPP) to anthranilate to yield N-(5'-phosphoribosyl)-anthranilate (PRA). In Aeromonas salmonicida (strain A449), this protein is Anthranilate phosphoribosyltransferase.